The primary structure comprises 231 residues: 5'-methylthioadenosine/S-adenosylhomocysteine nucleosidase (231 aa).

Catalysis depends on Glu-12, which acts as the Proton acceptor. Substrate-binding positions include Gly-78, Ile-153, and 174–175 (ME). The active-site Proton donor is the Asp-198.

It belongs to the PNP/UDP phosphorylase family. MtnN subfamily.

The enzyme catalyses S-adenosyl-L-homocysteine + H2O = S-(5-deoxy-D-ribos-5-yl)-L-homocysteine + adenine. It carries out the reaction S-methyl-5'-thioadenosine + H2O = 5-(methylsulfanyl)-D-ribose + adenine. It catalyses the reaction 5'-deoxyadenosine + H2O = 5-deoxy-D-ribose + adenine. It functions in the pathway amino-acid biosynthesis; L-methionine biosynthesis via salvage pathway; S-methyl-5-thio-alpha-D-ribose 1-phosphate from S-methyl-5'-thioadenosine (hydrolase route): step 1/2. Functionally, catalyzes the irreversible cleavage of the glycosidic bond in both 5'-methylthioadenosine (MTA) and S-adenosylhomocysteine (SAH/AdoHcy) to adenine and the corresponding thioribose, 5'-methylthioribose and S-ribosylhomocysteine, respectively. Also cleaves 5'-deoxyadenosine, a toxic by-product of radical S-adenosylmethionine (SAM) enzymes, into 5-deoxyribose and adenine. The sequence is that of 5'-methylthioadenosine/S-adenosylhomocysteine nucleosidase from Shewanella sp. (strain W3-18-1).